The sequence spans 120 residues: CLAVATA3/ESR (CLE)-related protein 9 (120 aa).

Positions 1–26 (MTMTHLNRLILISLLFVSLLLKSSTA) are cleaved as a signal peptide. Residue Asn-35 is glycosylated (N-linked (GlcNAc...) asparagine). The segment at 85–120 (RSSRKQPLLSPPPPEIDPRYGVDKRLVPSGPNPLHN) is disordered. A compositionally biased stretch (basic and acidic residues) spans 100–110 (IDPRYGVDKRL). Hydroxyproline occurs at positions 112 and 115. The O-linked (Ara...) hydroxyproline glycan is linked to Pro-115.

This sequence belongs to the CLV3/ESR signal peptide family. Post-translationally, the O-glycosylation (arabinosylation) of the hydroxyproline Pro-115 enhances binding affinity of the CLE9p peptide for its receptor. Mostly expressed in leaves, flowers, stems and apex, and, to a lower extent, in seedlings, roots, siliques and pollen.

It localises to the secreted. It is found in the extracellular space. Extracellular signal peptide that regulates cell fate. Represses root apical meristem maintenance. Regulates the transition of protophloem cells from proliferation to differentiation, thus impinging on postembryonic growth capacity of the root meristem; this signaling pathway requires CRN and CLV2. In Arabidopsis thaliana (Mouse-ear cress), this protein is CLAVATA3/ESR (CLE)-related protein 9.